Consider the following 210-residue polypeptide: Large ribosomal subunit protein uL4 (210 aa).

Residues 46–85 are disordered; it reads QGTASTLTRSEVRGGGRKPYKQKGTGRARQGSIRTPLRPG. Residues 60-71 are compositionally biased toward basic residues; that stretch reads GGRKPYKQKGTG.

It belongs to the universal ribosomal protein uL4 family. As to quaternary structure, part of the 50S ribosomal subunit.

In terms of biological role, one of the primary rRNA binding proteins, this protein initially binds near the 5'-end of the 23S rRNA. It is important during the early stages of 50S assembly. It makes multiple contacts with different domains of the 23S rRNA in the assembled 50S subunit and ribosome. Its function is as follows. Forms part of the polypeptide exit tunnel. In Prochlorococcus marinus (strain AS9601), this protein is Large ribosomal subunit protein uL4.